The chain runs to 125 residues: Large ribosomal subunit protein uL22 (125 aa).

It belongs to the universal ribosomal protein uL22 family. Part of the 50S ribosomal subunit.

Its function is as follows. This protein binds specifically to 23S rRNA; its binding is stimulated by other ribosomal proteins, e.g. L4, L17, and L20. It is important during the early stages of 50S assembly. It makes multiple contacts with different domains of the 23S rRNA in the assembled 50S subunit and ribosome. Functionally, the globular domain of the protein is located near the polypeptide exit tunnel on the outside of the subunit, while an extended beta-hairpin is found that lines the wall of the exit tunnel in the center of the 70S ribosome. This Thermobifida fusca (strain YX) protein is Large ribosomal subunit protein uL22.